The sequence spans 140 residues: Large ribosomal subunit protein uL14 (140 aa).

Belongs to the universal ribosomal protein uL14 family.

The polypeptide is Large ribosomal subunit protein uL14 (rpl-23) (Caenorhabditis elegans).